A 75-amino-acid polypeptide reads, in one-letter code: Large ribosomal subunit protein bL31 (75 aa).

This sequence belongs to the bacterial ribosomal protein bL31 family. Type A subfamily. Part of the 50S ribosomal subunit.

In terms of biological role, binds the 23S rRNA. This is Large ribosomal subunit protein bL31 from Gluconobacter oxydans (strain 621H) (Gluconobacter suboxydans).